Consider the following 413-residue polypeptide: uncharacterized protein (413 aa).

A helical membrane pass occupies residues 25-47; that stretch reads IVNLSALLPLITSTTSTAGSIIT.

Its subcellular location is the host membrane. This is an uncharacterized protein from Acidianus sp. F28 (AFV-2).